A 291-amino-acid chain; its full sequence is MEKLLERVNHILEALPYITKYSGKTVVIKYGGAAMAKADLKESFAKDIVLLKYVGIHPVIVHGGGPEINRLLDSLKIPTEFIHGHRVTDTQTMEVVEMVLTGKVNKQIVSMINSQGGKAVGISGKDGNLAKAVKAPIEIELEGKAKQLFDVGLVGRIESINPEILHNLQKEGFIPVISPVAESVEGDSLNINADTFAGEIAGALKAEKLILLTDTEGILIDGKLATGLSRGKMKEYIRKGEISGGMIPKVECCLAAIDQGVNRTHIIDGRVSHSILIEIFTNQGIGSLIES.

Residues 64–65 (GG), Arg86, and Asn190 contribute to the substrate site.

It belongs to the acetylglutamate kinase family. ArgB subfamily.

It is found in the cytoplasm. The catalysed reaction is N-acetyl-L-glutamate + ATP = N-acetyl-L-glutamyl 5-phosphate + ADP. It functions in the pathway amino-acid biosynthesis; L-arginine biosynthesis; N(2)-acetyl-L-ornithine from L-glutamate: step 2/4. Its function is as follows. Catalyzes the ATP-dependent phosphorylation of N-acetyl-L-glutamate. This Leptospira borgpetersenii serovar Hardjo-bovis (strain JB197) protein is Acetylglutamate kinase.